The sequence spans 25 residues: Caerin-2.4 (25 aa).

In terms of tissue distribution, expressed by the skin parotoid and/or rostral glands.

It localises to the secreted. In terms of biological role, antibacterial peptide, that adopts an alpha helical conformation which can disrupt bacterial membranes. Each caerin displays a different antimicrobial specificity. In Ranoidea caerulea (Green tree frog), this protein is Caerin-2.4.